The sequence spans 227 residues: Ubiquitin domain-containing protein 1 (227 aa).

Residues Met-1–Trp-36 form a disordered region. A compositionally biased stretch (basic and acidic residues) spans Gly-24–Trp-36. The 76-residue stretch at Phe-149–Pro-224 folds into the Ubiquitin-like domain.

Interacts with UBTD1.

Functionally, may be involved in the regulation of cellular senescence through a positive feedback loop with TP53. Is a TP53 downstream target gene that increases the stability of TP53 protein by promoting the ubiquitination and degradation of MDM2. In Bos taurus (Bovine), this protein is Ubiquitin domain-containing protein 1 (UBTD1).